We begin with the raw amino-acid sequence, 132 residues long: Small ribosomal subunit protein uS11 (132 aa).

This sequence belongs to the universal ribosomal protein uS11 family. As to quaternary structure, part of the 30S ribosomal subunit. Interacts with proteins S7 and S18. Binds to IF-3.

Functionally, located on the platform of the 30S subunit, it bridges several disparate RNA helices of the 16S rRNA. Forms part of the Shine-Dalgarno cleft in the 70S ribosome. The sequence is that of Small ribosomal subunit protein uS11 from Bifidobacterium animalis subsp. lactis (strain AD011).